Here is an 89-residue protein sequence, read N- to C-terminus: Phosphocarrier protein HPr (89 aa).

The HPr domain occupies 1-88 (MLEHELIVTN…ELFENRFNED (88 aa)). Catalysis depends on His-15, which acts as the Pros-phosphohistidine intermediate. Ser-46 is subject to Phosphoserine; by HPrK/P.

The protein belongs to the HPr family.

It is found in the cytoplasm. Phosphorylation on Ser-46 inhibits the phosphoryl transfer from enzyme I to HPr. Functionally, general (non sugar-specific) component of the phosphoenolpyruvate-dependent sugar phosphotransferase system (sugar PTS). This major carbohydrate active-transport system catalyzes the phosphorylation of incoming sugar substrates concomitantly with their translocation across the cell membrane. The phosphoryl group from phosphoenolpyruvate (PEP) is transferred to the phosphoryl carrier protein HPr by enzyme I. Phospho-HPr then transfers it to the PTS EIIA domain. The chain is Phosphocarrier protein HPr (ptsH) from Xylella fastidiosa (strain 9a5c).